Reading from the N-terminus, the 431-residue chain is 23S rRNA (uracil(1939)-C(5))-methyltransferase RlmD (431 aa).

The 59-residue stretch at 10-68 (RVTTRQIITVKVNDLDSFGQGVARHNGKALFIPGLLPEESAEVIITEDKKQFARARVSR) folds into the TRAM domain. 4 residues coordinate [4Fe-4S] cluster: cysteine 81, cysteine 87, cysteine 90, and cysteine 161. Glutamine 264, phenylalanine 293, asparagine 298, glutamate 314, asparagine 341, and aspartate 362 together coordinate S-adenosyl-L-methionine. Cysteine 388 functions as the Nucleophile in the catalytic mechanism.

It belongs to the class I-like SAM-binding methyltransferase superfamily. RNA M5U methyltransferase family. RlmD subfamily.

It carries out the reaction uridine(1939) in 23S rRNA + S-adenosyl-L-methionine = 5-methyluridine(1939) in 23S rRNA + S-adenosyl-L-homocysteine + H(+). In terms of biological role, catalyzes the formation of 5-methyl-uridine at position 1939 (m5U1939) in 23S rRNA. The chain is 23S rRNA (uracil(1939)-C(5))-methyltransferase RlmD from Salmonella choleraesuis (strain SC-B67).